Consider the following 182-residue polypeptide: NADH-quinone oxidoreductase subunit B 2 (182 aa).

Positions 55, 56, 120, and 150 each coordinate [4Fe-4S] cluster.

Belongs to the complex I 20 kDa subunit family. As to quaternary structure, NDH-1 is composed of 14 different subunits. Subunits NuoB, C, D, E, F, and G constitute the peripheral sector of the complex. Requires [4Fe-4S] cluster as cofactor.

The protein resides in the cell inner membrane. The catalysed reaction is a quinone + NADH + 5 H(+)(in) = a quinol + NAD(+) + 4 H(+)(out). In terms of biological role, NDH-1 shuttles electrons from NADH, via FMN and iron-sulfur (Fe-S) centers, to quinones in the respiratory chain. The immediate electron acceptor for the enzyme in this species is believed to be ubiquinone. Couples the redox reaction to proton translocation (for every two electrons transferred, four hydrogen ions are translocated across the cytoplasmic membrane), and thus conserves the redox energy in a proton gradient. This chain is NADH-quinone oxidoreductase subunit B 2, found in Sorangium cellulosum (strain So ce56) (Polyangium cellulosum (strain So ce56)).